Here is a 339-residue protein sequence, read N- to C-terminus: MSTQTVALDIMGGDIGPSETVPAVVQALSLLPQLKLILVGDQHQTTALLQQHGLLTHPRVRFVHASQVVGMGDKPIVALRTLKDSSMRVVLNLVKAGEADACVSAGNTGALMAMAKCVLKSLPGVDRPALIKALPTLSGKRTVMLDLGANVSCDADTLLQFAVMGSVVAEKVEGIASPRVALLNVGEEEIKGNDLVRHSAELLRQCSALNFVGFVEGDRIFSGECDVIVCDGFVGNVALKTAEGVVRMMAQLAGYPRKKRSFLGRLAGFMFKRRFSYLNPDQYNGASLLGLRGIVVKSHGRAERHALCNAILLAAQEAKHQLPLQIADRLESVFSDRDL.

The protein belongs to the PlsX family. As to quaternary structure, homodimer. Probably interacts with PlsY.

The protein localises to the cytoplasm. The catalysed reaction is a fatty acyl-[ACP] + phosphate = an acyl phosphate + holo-[ACP]. It participates in lipid metabolism; phospholipid metabolism. In terms of biological role, catalyzes the reversible formation of acyl-phosphate (acyl-PO(4)) from acyl-[acyl-carrier-protein] (acyl-ACP). This enzyme utilizes acyl-ACP as fatty acyl donor, but not acyl-CoA. In Aeromonas salmonicida (strain A449), this protein is Phosphate acyltransferase.